A 121-amino-acid chain; its full sequence is Large ribosomal subunit protein bL19 (121 aa).

This sequence belongs to the bacterial ribosomal protein bL19 family.

Its function is as follows. This protein is located at the 30S-50S ribosomal subunit interface and may play a role in the structure and function of the aminoacyl-tRNA binding site. The sequence is that of Large ribosomal subunit protein bL19 from Chlamydia caviae (strain ATCC VR-813 / DSM 19441 / 03DC25 / GPIC) (Chlamydophila caviae).